Consider the following 1082-residue polypeptide: Putative white-brown complex homolog protein 30 (1082 aa).

2 consecutive transmembrane segments (helical) span residues 12–32 (HIFL…SLDG) and 292–312 (NIHA…IMVY). The span at 329–348 (SREAAARHAKETTQARERWK) shows a compositional bias: basic and acidic residues. Residues 329–437 (SREAAARHAK…QAPKGKQLHT (109 aa)) are disordered. One can recognise an ABC transporter domain in the interval 484–726 (VAFKDLTLTL…FADIGITVPD (243 aa)). An ATP-binding site is contributed by 518-525 (GPSGAGKT). One can recognise an ABC transmembrane type-2 domain in the interval 832 to 1029 (RQYRYFVGRV…TLEAFVLSNA (198 aa)). Helical transmembrane passes span 853 to 873 (ALDF…AKVN), 877 to 897 (IDTL…KISA), 958 to 978 (YIVL…FAIL), 979 to 999 (YSPS…TLIA), and 1054 to 1074 (WILC…IAYF).

It belongs to the ABC transporter superfamily. ABCG family. Eye pigment precursor importer (TC 3.A.1.204) subfamily.

It is found in the membrane. The protein is Putative white-brown complex homolog protein 30 (WBC30) of Arabidopsis thaliana (Mouse-ear cress).